The primary structure comprises 336 residues: N-acetyl-gamma-glutamyl-phosphate reductase (336 aa).

The active site involves cysteine 156.

It belongs to the NAGSA dehydrogenase family. Type 1 subfamily.

Its subcellular location is the cytoplasm. It catalyses the reaction N-acetyl-L-glutamate 5-semialdehyde + phosphate + NADP(+) = N-acetyl-L-glutamyl 5-phosphate + NADPH + H(+). Its pathway is amino-acid biosynthesis; L-arginine biosynthesis; N(2)-acetyl-L-ornithine from L-glutamate: step 3/4. Catalyzes the NADPH-dependent reduction of N-acetyl-5-glutamyl phosphate to yield N-acetyl-L-glutamate 5-semialdehyde. The sequence is that of N-acetyl-gamma-glutamyl-phosphate reductase from Moritella profunda.